The sequence spans 322 residues: Large ribosomal subunit protein uL10 (322 aa).

The tract at residues 294–322 (APAAAAKAEKEEEPAEESDDEMGFGLFDE) is disordered. Over residues 304-322 (EEEPAEESDDEMGFGLFDE) the composition is skewed to acidic residues.

It belongs to the universal ribosomal protein uL10 family. P0 forms a pentameric complex by interaction with dimers of P1 and P2. Phosphorylated.

Its function is as follows. Ribosomal protein P0 is the functional equivalent of E.coli protein L10. The polypeptide is Large ribosomal subunit protein uL10 (Lupinus luteus (European yellow lupine)).